The sequence spans 1770 residues: Transposon Ty2-GR1 Gag-Pol polyprotein (1770 aa).

Composition is skewed to polar residues over residues 1-11 (MESQQLHQNPH), 19-39 (ASVT…SASN), and 49-60 (KVNSQQETTPGT). Disordered stretches follow at residues 1 to 86 (MESQ…GQYQ) and 360 to 453 (HSEY…LPDH). The tract at residues 295–397 (ENNINVSDRL…SSKPRAAKAH (103 aa)) is RNA-binding. Over residues 369-381 (TSPNTTNTKVTTR) the composition is skewed to low complexity. The span at 399–408 (IATSSKFSRV) shows a compositional bias: polar residues. Aspartate 457 serves as the catalytic For protease activity; shared with dimeric partner. The interval 579 to 636 (NVNKSKSVNKYPYPLIHRMLGHANFRSIQKSLKKNAVTYLKESDIEWSNASTYQCPDC) is integrase-type zinc finger-like. The Integrase catalytic domain maps to 656 to 831 (ESYEPFQYLH…AGLDITTILP (176 aa)). Positions 667 and 732 each coordinate Mg(2+). Disordered regions lie at residues 1004-1034 (MGGT…STNE), 1059-1135 (TEEP…KSSK), 1146-1165 (LPLP…VSKD), and 1170-1205 (HSRQ…TEIE). 2 stretches are compositionally biased toward polar residues: residues 1009–1034 (ESDT…STNE) and 1065–1082 (QRNS…STPS). Residues 1151 to 1165 (LTHKSPTDTSDVSKD) show a composition bias toward basic and acidic residues. A Bipartite nuclear localization signal motif is present at residues 1193-1227 (KKRSLEDNETEIEVSRDTWNNKNMRSLEPPRSKKR). A Reverse transcriptase Ty1/copia-type domain is found at 1353 to 1491 (NDYYITQLDI…DILGLEIKYQ (139 aa)). Positions 1361, 1442, 1443, 1625, 1667, and 1700 each coordinate Mg(2+). The 143-residue stretch at 1625 to 1767 (DASYGNQPYY…IKTFKLLTNK (143 aa)) folds into the RNase H Ty1/copia-type domain.

The capsid protein forms a homotrimer, from which the VLPs are assembled. The protease is a homodimer, whose active site consists of two apposed aspartic acid residues. In terms of processing, initially, virus-like particles (VLPs) are composed of the structural unprocessed proteins Gag and Gag-Pol, and also contain the host initiator methionine tRNA (tRNA(i)-Met) which serves as a primer for minus-strand DNA synthesis, and a dimer of genomic Ty RNA. Processing of the polyproteins occurs within the particle and proceeds by an ordered pathway, called maturation. First, the protease (PR) is released by autocatalytic cleavage of the Gag-Pol polyprotein, and this cleavage is a prerequisite for subsequent processing at the remaining sites to release the mature structural and catalytic proteins. Maturation takes place prior to the RT reaction and is required to produce transposition-competent VLPs.

The protein localises to the cytoplasm. The protein resides in the nucleus. The enzyme catalyses DNA(n) + a 2'-deoxyribonucleoside 5'-triphosphate = DNA(n+1) + diphosphate. The catalysed reaction is Endonucleolytic cleavage to 5'-phosphomonoester.. Its function is as follows. Capsid protein (CA) is the structural component of the virus-like particle (VLP), forming the shell that encapsulates the retrotransposons dimeric RNA genome. The particles are assembled from trimer-clustered units and there are holes in the capsid shells that allow for the diffusion of macromolecules. CA also has nucleocapsid-like chaperone activity, promoting primer tRNA(i)-Met annealing to the multipartite primer-binding site (PBS), dimerization of Ty2 RNA and initiation of reverse transcription. The aspartyl protease (PR) mediates the proteolytic cleavages of the Gag and Gag-Pol polyproteins after assembly of the VLP. In terms of biological role, reverse transcriptase/ribonuclease H (RT) is a multifunctional enzyme that catalyzes the conversion of the retro-elements RNA genome into dsDNA within the VLP. The enzyme displays a DNA polymerase activity that can copy either DNA or RNA templates, and a ribonuclease H (RNase H) activity that cleaves the RNA strand of RNA-DNA heteroduplexes during plus-strand synthesis and hydrolyzes RNA primers. The conversion leads to a linear dsDNA copy of the retrotransposon that includes long terminal repeats (LTRs) at both ends. Functionally, integrase (IN) targets the VLP to the nucleus, where a subparticle preintegration complex (PIC) containing at least integrase and the newly synthesized dsDNA copy of the retrotransposon must transit the nuclear membrane. Once in the nucleus, integrase performs the integration of the dsDNA into the host genome. This chain is Transposon Ty2-GR1 Gag-Pol polyprotein (TY2B-GR1), found in Saccharomyces cerevisiae (strain ATCC 204508 / S288c) (Baker's yeast).